The sequence spans 213 residues: uncharacterized protein (213 aa).

A compositionally biased stretch (polar residues) spans 1-14; the sequence is MSSDVLVTTPAQRQ. The disordered stretch occupies residues 1–26; that stretch reads MSSDVLVTTPAQRQTEPHAEAVSRNR. In terms of domain architecture, HTH tetR-type spans 29 to 89; the sequence is QATFRKVLAA…EVYLDLVRQV (61 aa).

This is an uncharacterized protein from Mycobacterium tuberculosis (strain CDC 1551 / Oshkosh).